The sequence spans 470 residues: NADH-quinone oxidoreductase subunit D (470 aa).

Positions M1 to T18 are enriched in low complexity. The segment at M1–A37 is disordered.

Belongs to the complex I 49 kDa subunit family. In terms of assembly, NDH-1 is composed of 14 different subunits. Subunits NuoB, C, D, E, F, and G constitute the peripheral sector of the complex.

It is found in the cell membrane. The enzyme catalyses a quinone + NADH + 5 H(+)(in) = a quinol + NAD(+) + 4 H(+)(out). Functionally, NDH-1 shuttles electrons from NADH, via FMN and iron-sulfur (Fe-S) centers, to quinones in the respiratory chain. The immediate electron acceptor for the enzyme in this species is believed to be a menaquinone. Couples the redox reaction to proton translocation (for every two electrons transferred, four hydrogen ions are translocated across the cytoplasmic membrane), and thus conserves the redox energy in a proton gradient. This is NADH-quinone oxidoreductase subunit D from Frankia alni (strain DSM 45986 / CECT 9034 / ACN14a).